A 339-amino-acid polypeptide reads, in one-letter code: Fructose-1,6-bisphosphatase class 1 (339 aa).

Glu94, Asp116, Leu118, and Asp119 together coordinate Mg(2+). Residues Asp119–Ser122, Asn210, and Lys276 each bind substrate. Glu282 contributes to the Mg(2+) binding site.

The protein belongs to the FBPase class 1 family. Homotetramer. Mg(2+) serves as cofactor.

It is found in the cytoplasm. The catalysed reaction is beta-D-fructose 1,6-bisphosphate + H2O = beta-D-fructose 6-phosphate + phosphate. Its pathway is carbohydrate biosynthesis; gluconeogenesis. The sequence is that of Fructose-1,6-bisphosphatase class 1 from Burkholderia ambifaria (strain MC40-6).